The chain runs to 420 residues: CinA-like protein (420 aa).

The protein belongs to the CinA family.

The protein is CinA-like protein of Chlorobium phaeobacteroides (strain BS1).